The chain runs to 389 residues: Transcription factor MYB97 (389 aa).

HTH myb-type domains lie at 16 to 68 (GVVL…ANHL) and 69 to 123 (RPNL…KRFQ). DNA-binding regions (H-T-H motif) lie at residues 44-68 (WNSVQKKTWLARCGKSCRLRWANHL) and 96-119 (WARMAAQLPGRTDNEIKNYWNTRL). The tract at residues 131 to 159 (PPEYSQNNHQQQMYPQQPSSPLPSQTPAS) is disordered. Over residues 140 to 159 (QQQMYPQQPSSPLPSQTPAS) the composition is skewed to low complexity.

Accumulates in pollen grains and pollen tube. Mostly expressed in mature pollen grains, and, to a lower extent, in inflorescences and siliques.

It localises to the nucleus. Transcription activator. Binds to 5'-CAACTGTC-3' and/or 5'-TAACAAA-3' motif in target gene promoter to promote their expression. Together with MYB101 and MYB120, functions as a male factor that controls pollen tube-synergid interaction in fertilization. Required for pollen tube growth arrest and sperm cell release in the female gametophyte, probably via the regulation of pollen tube-specific gene expression. The sequence is that of Transcription factor MYB97 from Arabidopsis thaliana (Mouse-ear cress).